Consider the following 20-residue polypeptide: Implantin (20 aa).

The protein belongs to the EF-1-beta/EF-1-delta family. Post-translationally, phosphorylated. As to expression, uterus and embryo.

The protein resides in the cytoplasm. Its subcellular location is the nucleus. In terms of biological role, binds DNA. In Mus musculus (Mouse), this protein is Implantin.